We begin with the raw amino-acid sequence, 72 residues long: Translation initiation factor IF-1 (72 aa).

Residues 1–72 (MSKEEVLEFS…TKGRITYRYK (72 aa)) enclose the S1-like domain.

Belongs to the IF-1 family. As to quaternary structure, component of the 30S ribosomal translation pre-initiation complex which assembles on the 30S ribosome in the order IF-2 and IF-3, IF-1 and N-formylmethionyl-tRNA(fMet); mRNA recruitment can occur at any time during PIC assembly.

The protein resides in the cytoplasm. In terms of biological role, one of the essential components for the initiation of protein synthesis. Stabilizes the binding of IF-2 and IF-3 on the 30S subunit to which N-formylmethionyl-tRNA(fMet) subsequently binds. Helps modulate mRNA selection, yielding the 30S pre-initiation complex (PIC). Upon addition of the 50S ribosomal subunit IF-1, IF-2 and IF-3 are released leaving the mature 70S translation initiation complex. The protein is Translation initiation factor IF-1 of Bartonella tribocorum (strain CIP 105476 / IBS 506).